The following is a 422-amino-acid chain: L-threonine dehydratase biosynthetic IlvA (422 aa).

An N6-(pyridoxal phosphate)lysine modification is found at lysine 56. Pyridoxal 5'-phosphate is bound by residues asparagine 83, 189–193 (GGGGL), and serine 315. An ACT-like domain is found at 339–413 (HYFILNFPQR…FDKSNIYINE (75 aa)).

Belongs to the serine/threonine dehydratase family. In terms of assembly, homotetramer. Pyridoxal 5'-phosphate is required as a cofactor.

It carries out the reaction L-threonine = 2-oxobutanoate + NH4(+). It functions in the pathway amino-acid biosynthesis; L-isoleucine biosynthesis; 2-oxobutanoate from L-threonine: step 1/1. In terms of biological role, catalyzes the anaerobic formation of alpha-ketobutyrate and ammonia from threonine in a two-step reaction. The first step involved a dehydration of threonine and a production of enamine intermediates (aminocrotonate), which tautomerizes to its imine form (iminobutyrate). Both intermediates are unstable and short-lived. The second step is the nonenzymatic hydrolysis of the enamine/imine intermediates to form 2-ketobutyrate and free ammonia. In the low water environment of the cell, the second step is accelerated by RidA. The polypeptide is L-threonine dehydratase biosynthetic IlvA (ilvA) (Staphylococcus saprophyticus subsp. saprophyticus (strain ATCC 15305 / DSM 20229 / NCIMB 8711 / NCTC 7292 / S-41)).